The chain runs to 257 residues: MRILLTNDDGIFAPGLEALRNALSDLAETIYIIAPDRERSATGHSITVHRPIRVREACHADGNCCGWIVDGTPADCVKLALESLLPETPDLVISGINLGPNLGTDVLYSGTVSAAMEGLINGVPSLAISLASHREAEFEEAAAFARRLLPLVFEYREIFTANTLLNINVPPGKPVGVRLTRLGNLRYADAVDRRVDPRGRYYYWMAGKPFSPDGHDPDTDIGAVKDRHISITPVKIDLTDYEALDALKKWPVDWKGS.

The a divalent metal cation site is built by Asp8, Asp9, Ser40, and Asn97.

This sequence belongs to the SurE nucleotidase family. A divalent metal cation is required as a cofactor.

The protein resides in the cytoplasm. It carries out the reaction a ribonucleoside 5'-phosphate + H2O = a ribonucleoside + phosphate. Its function is as follows. Nucleotidase that shows phosphatase activity on nucleoside 5'-monophosphates. The sequence is that of 5'-nucleotidase SurE from Desulforudis audaxviator (strain MP104C).